The chain runs to 752 residues: Phosphatidylinositol 4-phosphate 5-kinase 1 (752 aa).

MORN repeat units follow at residues 81-103, 104-126, 127-149, 150-172, 173-195, 196-218, and 219-241; these read YIGS…DGCM, YEGD…SGAT, YEGE…DGDT, YRGT…NGDF, YEGT…NGNQ, YTGE…NGNR, and YEGL…DGSS. One can recognise a PIPK domain in the interval 349–748; the sequence is SKGHKKYDLM…RFRDFISRIF (400 aa). Residues 708 to 729 are activation loop; sequence YDITKKIEHAYKSLQADPASIS.

In terms of processing, phosphorylation inactivates the enzyme. As to expression, expressed in the whole plant, preferentially in roots. Strongly expressed in meristematic tissues, namely procambial cell layers.

It catalyses the reaction a 1,2-diacyl-sn-glycero-3-phospho-(1D-myo-inositol 4-phosphate) + ATP = a 1,2-diacyl-sn-glycero-3-phospho-(1D-myo-inositol-4,5-bisphosphate) + ADP + H(+). Its function is as follows. Catalyzes the synthesis of phosphatidylinositol 4,5-bisphosphate and phosphatidylinositol 3,4-bisphosphate. This is Phosphatidylinositol 4-phosphate 5-kinase 1 (PIP5K1) from Arabidopsis thaliana (Mouse-ear cress).